The chain runs to 70 residues: MATNIVGKVKWYNSTKNFGFIEQENGGKDVFVHKSAVDAAGLHSLEEGQYVIFDLEEKQGKAYAVNLRIK.

One can recognise a CSD domain in the interval 7-67 (GKVKWYNSTK…KQGKAYAVNL (61 aa)).

The protein resides in the cytoplasm. In Rickettsia felis (strain ATCC VR-1525 / URRWXCal2) (Rickettsia azadi), this protein is Cold shock-like protein CspA (cspA).